The following is a 1125-amino-acid chain: tRNA (34-2'-O)-methyltransferase regulator WDR6 (1125 aa).

Met1 bears the N-acetylmethionine mark. WD repeat units lie at residues Val53 to Val97, Arg105 to Pro143, Cys147 to Pro189, Ala200 to Val238, Arg247 to His285, Ile289 to Leu327, Leu335 to Leu376, Trp381 to Ile422, Pro425 to Ala470, Ile476 to Val520, Pro559 to Gly598, Val604 to Pro642, His645 to Ala684, Leu739 to Val785, Arg848 to Leu897, His905 to Leu950, Gly974 to Leu1016, Glu1040 to Leu1077, and Thr1083 to Asp1125.

Belongs to the WD repeat WDR6 family. Interacts with FTSJ1; the interaction is direct, and required for 2'-O-methylation of position 34 in substrate tRNAs. Interacts with IRS4. Interacts with STK11/LKB1.

The protein localises to the cytoplasm. Its function is as follows. Together with methyltransferase FTSJ1, methylates the 2'-O-ribose of nucleotides at position 34 of the tRNA anticodon loop of substrate tRNAs. Required for the correct positioning of the substrate tRNA for methylation. Required to suppress amino acid starvation-induced autophagy. Enhances the STK11/LKB1-induced cell growth suppression activity. The sequence is that of tRNA (34-2'-O)-methyltransferase regulator WDR6 (Wdr6) from Mus musculus (Mouse).